The chain runs to 836 residues: Pentatricopeptide repeat-containing protein At1g79490, mitochondrial (836 aa).

A mitochondrion-targeting transit peptide spans 1-85 (MIRGRTAKVI…QCRSIVRRFC (85 aa)). 12 PPR repeats span residues 204 to 238 (SDEC…SSSH), 242 to 276 (SFNA…GCKI), 277 to 311 (DTQT…DSLL), 312 to 346 (DGST…KLRP), 347 to 381 (SFSV…GHRP), 382 to 416 (SATM…GFRP), 417 to 451 (NFGL…GFLP), 452 to 486 (TPST…GLRP), 487 to 521 (GLSS…GYSV), 528 to 555 (VLMI…GIKT), 556 to 590 (NNFI…AGKV), and 591 to 625 (DLVL…KHKA). The Smr domain maps to 710–786 (LDVRNLSVGA…APGELVMEWF (77 aa)).

Belongs to the PPR family. P subfamily.

The protein localises to the mitochondrion. This chain is Pentatricopeptide repeat-containing protein At1g79490, mitochondrial (EMB2217), found in Arabidopsis thaliana (Mouse-ear cress).